The chain runs to 378 residues: B3 domain-containing protein Os03g0622200 (378 aa).

The segment at residues 29 to 124 (SKHFLKHMVG…SFDVLIFDPS (96 aa)) is a DNA-binding region (TF-B3 1). The segment at 140 to 159 (GRAENSAGAEQGGRNGRRTP) is disordered. Positions 256-370 (FVQVIHSSHV…TMTVHVLRRV (115 aa)) form a DNA-binding region, TF-B3 2.

Its subcellular location is the nucleus. In Oryza sativa subsp. japonica (Rice), this protein is B3 domain-containing protein Os03g0622200.